The sequence spans 843 residues: Probable cleavage and polyadenylation specificity factor subunit 2 (843 aa).

A compositionally biased stretch (basic and acidic residues) spans 414–425 (AEETRLRMERAR). Disordered regions lie at residues 414 to 443 (AEET…DIAA) and 691 to 753 (DKNR…TKGK). The span at 432–441 (ESDDSDDDDI) shows a compositional bias: acidic residues. A compositionally biased stretch (basic and acidic residues) spans 732-746 (SGKEVENGHTNDSRT).

The protein belongs to the metallo-beta-lactamase superfamily. RNA-metabolizing metallo-beta-lactamase-like family. CPSF2/YSH1 subfamily. CPSF is a heterotetramer composed of four distinct subunits 160, 100, 70 and 30 kDa.

It is found in the nucleus. In terms of biological role, CPSF plays a key role in pre-mRNA 3'-end formation, recognizing the AAUAAA signal sequence and interacting with poly(A)polymerase and other factors to bring about cleavage and poly(A) addition. In Caenorhabditis elegans, this protein is Probable cleavage and polyadenylation specificity factor subunit 2 (cpsf-2).